The following is a 208-amino-acid chain: Uracil phosphoribosyltransferase (208 aa).

5-phospho-alpha-D-ribose 1-diphosphate contacts are provided by residues Arg-78, Arg-103, and 130-138; that span reads DPMLATGGS. Uracil is bound by residues Ile-193 and 198–200; that span reads GDA. Residue Asp-199 participates in 5-phospho-alpha-D-ribose 1-diphosphate binding.

It belongs to the UPRTase family. Requires Mg(2+) as cofactor.

The catalysed reaction is UMP + diphosphate = 5-phospho-alpha-D-ribose 1-diphosphate + uracil. It participates in pyrimidine metabolism; UMP biosynthesis via salvage pathway; UMP from uracil: step 1/1. With respect to regulation, allosterically activated by GTP. Functionally, catalyzes the conversion of uracil and 5-phospho-alpha-D-ribose 1-diphosphate (PRPP) to UMP and diphosphate. In Pectobacterium carotovorum subsp. carotovorum (strain PC1), this protein is Uracil phosphoribosyltransferase.